A 440-amino-acid polypeptide reads, in one-letter code: MENIQKLIARYPLVADLVALKETTWFNPGATSLAQGLPYVGLTEQDVNAAHDRLARFAPYLAKAFPETAAAGGMIESDMVAIPAMQKRLEKEYGQTIDGEMLLKKDSHLAISGSIKARGGIYEVLTHAEKLALEAGLLTTDDDYSVLLSPGFKQFFSRYSIAVGSTGNLGLSIGIMSACIGFKVTVHMSADARAWKKAKLRRHGVTVVEYEDDYGVAVEQGRKAAQADPNCFFIDDENSRTLFLGYAVAGQRLKAQFAQQGRVVDASHPLFVYLPCGVGGGPGGVAFGLKLAFGDNVHCFFAEPTHSPCMLLGVYTGLHDAISVQDIGIDNLTAADGLAVGRASGFVGRAMERLLDGLYTLDDQTMYDMLGWLAQEEGIRLEPSALAGMAGPQRICAAAAYPQKLGFGQALLDNATHLVWATGGGMVPEDEMEQYLAKGR.

Lysine 116 is subject to N6-(pyridoxal phosphate)lysine.

It belongs to the serine/threonine dehydratase family. DsdA subfamily. In terms of assembly, monomer. Pyridoxal 5'-phosphate serves as cofactor.

It catalyses the reaction D-serine = pyruvate + NH4(+). The chain is D-serine dehydratase from Salmonella arizonae (strain ATCC BAA-731 / CDC346-86 / RSK2980).